A 297-amino-acid chain; its full sequence is E3 ubiquitin-protein ligase RNF212B (297 aa).

The RING-type zinc finger occupies 6-40 (CNQCFRKDGAHFFVTSCGHIFCKKCMTLEKCAVCG). Residues 87–136 (LLIAFYKDRITKLEAAVKEAQEMAASQNKELSALRKENGELKKILDILKG) are a coiled coil. 2 disordered regions span residues 152–179 (VGITSPSQSVAPRPSSHHSSQVVSRSSS) and 198–269 (RGLH…ESLP). Residues 163–179 (PRPSSHHSSQVVSRSSS) are compositionally biased toward low complexity. Polar residues predominate over residues 206–234 (PGDSYTETPSPASTHSLSYRPSSASSGQG).

In terms of assembly, homodimer. In terms of processing, autoubiquitinated.

Its subcellular location is the chromosome. The catalysed reaction is S-ubiquitinyl-[E2 ubiquitin-conjugating enzyme]-L-cysteine + [acceptor protein]-L-lysine = [E2 ubiquitin-conjugating enzyme]-L-cysteine + N(6)-ubiquitinyl-[acceptor protein]-L-lysine.. It functions in the pathway protein modification; protein ubiquitination. Its function is as follows. Ubiquitin E3 ligase that acts as a crucial factor for crossing-over (CO) formation during meiosis. Essential for normal prophase I progression and for ensuring appropriate CO designation in meiosis. Recruits key components of the cross-over machinery either directly ou indirectly, leading to the activation of the MutL-gamma complex. The function of RNF212B in CO designation is dependent on its catalytic activity. The protein is E3 ubiquitin-protein ligase RNF212B (Rnf212b) of Mus musculus (Mouse).